A 273-amino-acid chain; its full sequence is Ethanolamine ammonia-lyase small subunit (273 aa).

Adenosylcob(III)alamin contacts are provided by Val-164, Glu-185, and Cys-214.

The protein belongs to the EutC family. In terms of assembly, the basic unit is a heterodimer which dimerizes to form tetramers. The heterotetramers trimerize; 6 large subunits form a core ring with 6 small subunits projecting outwards. It depends on adenosylcob(III)alamin as a cofactor.

It is found in the bacterial microcompartment. It catalyses the reaction ethanolamine = acetaldehyde + NH4(+). It participates in amine and polyamine degradation; ethanolamine degradation. Its function is as follows. Catalyzes the deamination of various vicinal amino-alcohols to oxo compounds. Allows this organism to utilize ethanolamine as the sole source of nitrogen and carbon in the presence of external vitamin B12. In Pseudomonas aeruginosa (strain UCBPP-PA14), this protein is Ethanolamine ammonia-lyase small subunit.